Consider the following 339-residue polypeptide: Dihydroorotate dehydrogenase (quinone) (339 aa).

FMN is bound by residues 61-65 (AGLDK) and threonine 85. A substrate-binding site is contributed by lysine 65. A substrate-binding site is contributed by 110-114 (NRMGF). Asparagine 138 and asparagine 171 together coordinate FMN. Asparagine 171 serves as a coordination point for substrate. Catalysis depends on serine 174, which acts as the Nucleophile. Asparagine 176 lines the substrate pocket. Lysine 216 and threonine 244 together coordinate FMN. 245 to 246 (NT) contacts substrate. Residues glycine 267, glycine 296, and 317–318 (YS) each bind FMN.

This sequence belongs to the dihydroorotate dehydrogenase family. Type 2 subfamily. In terms of assembly, monomer. FMN is required as a cofactor.

It is found in the cell membrane. It carries out the reaction (S)-dihydroorotate + a quinone = orotate + a quinol. Its pathway is pyrimidine metabolism; UMP biosynthesis via de novo pathway; orotate from (S)-dihydroorotate (quinone route): step 1/1. Catalyzes the conversion of dihydroorotate to orotate with quinone as electron acceptor. In Pseudomonas fluorescens (strain ATCC BAA-477 / NRRL B-23932 / Pf-5), this protein is Dihydroorotate dehydrogenase (quinone).